The primary structure comprises 171 residues: Co-chaperone protein HscB (171 aa).

Positions 2–74 constitute a J domain; that stretch reads DYFTFFGLPA…LMRAEYLLSL (73 aa).

The protein belongs to the HscB family. Interacts with HscA and stimulates its ATPase activity. Interacts with IscU.

Functionally, co-chaperone involved in the maturation of iron-sulfur cluster-containing proteins. Seems to help targeting proteins to be folded toward HscA. The sequence is that of Co-chaperone protein HscB from Shigella sonnei (strain Ss046).